The primary structure comprises 429 residues: MSSVVVVGTQWGDEGKGKITDFLSKQAEVVARYQGGDNAGHTIVFNDTKYKLHLIPSGIFYSDKTCVIGNGMVVNPKSLVTELAYLHERGVSTDNLRISNRAHIILPYHQLQDRLEEEAKGDAKVGTTLKGIGPAYMDKAARIGIRIADLLDKEVFAEKLKTVLELKNRMFVKMYEVDPIEFDDIFQEYYAYGQQFAKYVCDTSVVLNDSLDEEKKVLFEGAQGVLLDIDHGTYPFVTSSNAASGGVSSGAGIGPSKIHHVVGVCKAYTSRVGDGPFPTELDDEIGHTIREVGKEYGTTTGRPRRVGWFDSVVVRHSRRVSGITDLCLNSIDVLTGLETLKICTSYEYEGKHLDEYPPNFRVLEKCVPVYEELPGWTEDITGVRRFEDLPENAQRYVRRIEELTGIELLTFSVGPAREQTVILRDIYEA.

GTP-binding positions include 12–18 (GDEGKGK) and 40–42 (GHT). The active-site Proton acceptor is D13. Positions 13 and 40 each coordinate Mg(2+). IMP-binding positions include 13-16 (DEGK), 38-41 (NAGH), T128, R142, Q223, T238, and R302. Residue H41 is the Proton donor of the active site. Residue 298-304 (TTTGRPR) participates in substrate binding. Residues R304, 330 to 332 (SID), and 412 to 414 (SVG) contribute to the GTP site.

The protein belongs to the adenylosuccinate synthetase family. Homodimer. It depends on Mg(2+) as a cofactor.

The protein localises to the cytoplasm. It carries out the reaction IMP + L-aspartate + GTP = N(6)-(1,2-dicarboxyethyl)-AMP + GDP + phosphate + 2 H(+). It participates in purine metabolism; AMP biosynthesis via de novo pathway; AMP from IMP: step 1/2. Plays an important role in the de novo pathway of purine nucleotide biosynthesis. Catalyzes the first committed step in the biosynthesis of AMP from IMP. The protein is Adenylosuccinate synthetase of Exiguobacterium sp. (strain ATCC BAA-1283 / AT1b).